A 312-amino-acid chain; its full sequence is Olfactory receptor 51B5 (312 aa).

Over 1-23 (MSSSGSSHPFLLTGFPGLEEAHH) the chain is Extracellular. A helical membrane pass occupies residues 24 to 44 (WISVFFLFMYISILFGNGTLL). Over 45–52 (LLIKEDHN) the chain is Cytoplasmic. Residues 53–73 (LHEPMYFFLAMLAATDLGLAL) form a helical membrane-spanning segment. Residues 74-97 (TTMPTVLGVLWLDHREIGSAACFS) are Extracellular-facing. An intrachain disulfide couples Cys-95 to Cys-187. A helical transmembrane segment spans residues 98–118 (QAYFIHSLSFLESGILLAMAY). Topologically, residues 119-137 (DRFIAICNPLRYTSVLTNT) are cytoplasmic. The chain crosses the membrane as a helical span at residues 138–158 (RVVKIGLGVLMRGFVSVVPPI). At 159-194 (RPLYFFLYCHSHVLSHAFCLHQDVIKLACADTTFNR) the chain is on the extracellular side. Residues 195–215 (LYPAVLVVFIFVLDYLIIFIS) traverse the membrane as a helical segment. Topologically, residues 216-235 (YVLILKTVLSIASREERAKA) are cytoplasmic. The helical transmembrane segment at 236 to 256 (LITCVSHICCVLVFYVTVIGL) threads the bilayer. The Extracellular portion of the chain corresponds to 257-271 (SLIHRFGKQVPHIVH). Residues 272–292 (LIMSYAYFLFPPLMNPITYSV) traverse the membrane as a helical segment. Residues 293–312 (KTKQIQNAILHLFTTHRIGT) lie on the Cytoplasmic side of the membrane.

This sequence belongs to the G-protein coupled receptor 1 family.

It is found in the cell membrane. In terms of biological role, odorant receptor. The protein is Olfactory receptor 51B5 (OR51B5) of Homo sapiens (Human).